The sequence spans 291 residues: ATP synthase gamma chain (291 aa).

It belongs to the ATPase gamma chain family. As to quaternary structure, F-type ATPases have 2 components, CF(1) - the catalytic core - and CF(0) - the membrane proton channel. CF(1) has five subunits: alpha(3), beta(3), gamma(1), delta(1), epsilon(1). CF(0) has three main subunits: a, b and c.

It localises to the cell inner membrane. Its function is as follows. Produces ATP from ADP in the presence of a proton gradient across the membrane. The gamma chain is believed to be important in regulating ATPase activity and the flow of protons through the CF(0) complex. The polypeptide is ATP synthase gamma chain (Chlorobium limicola (strain DSM 245 / NBRC 103803 / 6330)).